Consider the following 371-residue polypeptide: tRNA-specific 2-thiouridylase MnmA (371 aa).

ATP-binding positions include 9–16 and methionine 35; that span reads AMSGGVDS. Cysteine 109 (nucleophile) is an active-site residue. A disulfide bridge links cysteine 109 with cysteine 207. ATP is bound at residue glycine 133. Positions 157-159 are interaction with tRNA; that stretch reads KDQ. Cysteine 207 acts as the Cysteine persulfide intermediate in catalysis.

The protein belongs to the MnmA/TRMU family.

The protein localises to the cytoplasm. The enzyme catalyses S-sulfanyl-L-cysteinyl-[protein] + uridine(34) in tRNA + AH2 + ATP = 2-thiouridine(34) in tRNA + L-cysteinyl-[protein] + A + AMP + diphosphate + H(+). In terms of biological role, catalyzes the 2-thiolation of uridine at the wobble position (U34) of tRNA, leading to the formation of s(2)U34. The polypeptide is tRNA-specific 2-thiouridylase MnmA (Solibacter usitatus (strain Ellin6076)).